The primary structure comprises 400 residues: tRNA(Met) cytidine acetate ligase (400 aa).

Residues 7–20, G102, N165, and R190 each bind ATP; that span reads ITEY…HIYH.

Belongs to the TmcAL family.

It localises to the cytoplasm. It carries out the reaction cytidine(34) in elongator tRNA(Met) + acetate + ATP = N(4)-acetylcytidine(34) in elongator tRNA(Met) + AMP + diphosphate. Its function is as follows. Catalyzes the formation of N(4)-acetylcytidine (ac(4)C) at the wobble position of elongator tRNA(Met), using acetate and ATP as substrates. First activates an acetate ion to form acetyladenylate (Ac-AMP) and then transfers the acetyl group to tRNA to form ac(4)C34. In Clostridium novyi (strain NT), this protein is tRNA(Met) cytidine acetate ligase.